A 640-amino-acid polypeptide reads, in one-letter code: MNYFMPLRNIWNRVREFPRASTTASGITWMSRYIYGYHRLMLEDLAPGAPATERWPLYRQPSPHFLIGYQYLVRTCNDYIFDTRAYSRLKYTELVRPGHQTVNWSVMANCSYTINTGAYHRFVDFDDFQATLTQVQQAILAERVVAELALVQPMRGFGITRMHGRAGEEEVPVERLMQDYYKDLARCQDDAWGMAHRLRIQQAGPKDLVLLATIRRLKTAYFNFITSSIVSPSQEGEGEERENPDRASSRPRPQETVLSLPCDCDWLDAFVERFSDPVDLETIRSLRGVPTGQLIKCIISAVSLPNGEPPSHHFREMRGGVFTLRPRENGRAVTETMRRRRGEVIERFIDRLPVRRRRRRVPPPPAAPPEEEEMLVEEEEIEEEILGAFEREVRTTIAELIRLLEEELTVSARNSQFFNFAVNFYEAMERLEALGDVSEMPLRRWIMYFFVTEHIATTLNYLFQRLCNYAVFTRHVELNLAQVVMRARDPVGAVVYSRVWNEAGMNAFSQLIGRISNDLAATVERAGRGDLQEEEIEQFMAEIAYQDNSGDVQEILRQAAVNDTEIDSVELSFRFKLTGPVAFTQRRQIQDVNRRVVAHASLLRAQYQNLPARGADVPLPAMPPGPEPPLPPGARPRHRF.

The tract at residues 232 to 257 (PSQEGEGEERENPDRASSRPRPQETV) is disordered. The Nuclear localization signal signature appears at 351–360 (RLPVRRRRRR). Ser-549 carries the O-(5'-phospho-DNA)-serine modification. Residues 614–640 (GADVPLPAMPPGPEPPLPPGARPRHRF) are disordered. Positions 620 to 634 (PAMPPGPEPPLPPGA) are enriched in pro residues.

It belongs to the adenoviridae terminal protein family. As to quaternary structure, heterodimer with the polymerase; this heterodimer binds to bp 9 to 18 of the genome. Interacts with host POU2F1; POU2F1 binds to the auxiliary sequences in the inverted terminal repeats and tethers the pTP-POL heterodimer to the origin DNA thereby participating in the assembly of the pre-initiation complex (POL-TP-DBP-NFIA-POU2F1). Post-translationally, preterminal protein is used to replicate viral genome, upon genomic encapsidation it is processed first into iTP and finally into TP by adenovirus protease.

The protein localises to the host nucleus matrix. Its function is as follows. Protein covalently bound to the viral DNA that acts as a primer for viral genomic replication by DNA strand displacement. Assembles on the viral origin of replication in an initiation complex with viral polymerase, DBP, host NFIA and host POU2F1/OCT1. During initiation, the polymerase covalently couples the first dCTP with Ser-580 of pTP. The terminal protein stimulates the template activity over 20 fold compared to protein-free templates. Neo-synthesized viral genomes are linked to two preterminal proteins, one for each 5' end. These new genomes are encapsidated in the nucleus, and during capsid maturation by viral protease, preterminal protein is first cleaved into intermediary (iTP), then into mature TP. May play a role in host nuclear matrix localization of genomic DNA. The protein is Preterminal protein of Human adenovirus B serotype 7 (HAdV-7).